We begin with the raw amino-acid sequence, 219 residues long: Urease accessory protein UreG (219 aa).

Residues 1 to 20 are disordered; it reads MSALHSIPHRSKKLPPLRVG. 23–30 provides a ligand contact to GTP; that stretch reads GPVGSGKT.

This sequence belongs to the SIMIBI class G3E GTPase family. UreG subfamily. Homodimer. UreD, UreF and UreG form a complex that acts as a GTP-hydrolysis-dependent molecular chaperone, activating the urease apoprotein by helping to assemble the nickel containing metallocenter of UreC. The UreE protein probably delivers the nickel.

It is found in the cytoplasm. Functionally, facilitates the functional incorporation of the urease nickel metallocenter. This process requires GTP hydrolysis, probably effectuated by UreG. This is Urease accessory protein UreG from Methylibium petroleiphilum (strain ATCC BAA-1232 / LMG 22953 / PM1).